A 560-amino-acid chain; its full sequence is Serine/threonine-protein kinase TOS3 (560 aa).

A Protein kinase domain is found at 50–344; it reads FEILATLGNG…LADIKVHPFM (295 aa). ATP-binding positions include 56-64 and lysine 79; that span reads LGNGQYGKV. The active-site Proton acceptor is aspartate 189.

This sequence belongs to the protein kinase superfamily. Ser/Thr protein kinase family. Post-translationally, autophosphorylated.

It catalyses the reaction L-seryl-[protein] + ATP = O-phospho-L-seryl-[protein] + ADP + H(+). It carries out the reaction L-threonyl-[protein] + ATP = O-phospho-L-threonyl-[protein] + ADP + H(+). In terms of biological role, one of the three SNF1 protein kinases (with SAK1 and ELM1) which are required for growth on nonfermentable carbon sources and nonpreferred sugars and for response to environmental stress. Activates SNF1 by phosphorylation of its activation-loop 'Thr-210'. Required for the regulation by SNF1 of the transcription of a large set of genes, the modification the activity of metabolic enzymes, and the control of various nutrient-responsive cellular developmental processes. Also phosphorylates GAL83, MIG1 and SIP2. The protein is Serine/threonine-protein kinase TOS3 (TOS3) of Saccharomyces cerevisiae (strain ATCC 204508 / S288c) (Baker's yeast).